A 328-amino-acid polypeptide reads, in one-letter code: GMP reductase (328 aa).

Cysteine 176 functions as the Thioimidate intermediate in the catalytic mechanism. Position 205–228 (205–228 (IIADGGIRTHGDIAKSVRFGATMV)) interacts with NADP(+).

Belongs to the IMPDH/GMPR family. GuaC type 2 subfamily.

It catalyses the reaction IMP + NH4(+) + NADP(+) = GMP + NADPH + 2 H(+). In terms of biological role, catalyzes the irreversible NADPH-dependent deamination of GMP to IMP. It functions in the conversion of nucleobase, nucleoside and nucleotide derivatives of G to A nucleotides, and in maintaining the intracellular balance of A and G nucleotides. The chain is GMP reductase from Shouchella clausii (strain KSM-K16) (Alkalihalobacillus clausii).